A 330-amino-acid chain; its full sequence is MSSDELTSTSSLIVIPCLNEASHIEALIEKLRPSLTPLNARVVIADGGSTDGTREIARRLATEDPRVLFLDNPKRIQSAAVNRAVAELGAGSDYLIRIDAHGTYPDDYCERLVEDALATGADSVVVAMQTVGFSTFQKATAFAQNSKLGNGGSKHRTGAVGHWAEHGHHALMRIEAFKAVGGYDESFSHNEDAELDYRLGKAGYRIWMTDKTSMVYYPRAKLVPLFWQYFGYGRGRAKNFLKHRAMPGLRQMLPLAVAPIAFGALLAIVNWMAVVPVGVWAAACLGYGVWMALGQRNPYGPLAAVAAMVMHLAWSAGFWRELLDFRRRVA.

The next 3 membrane-spanning stretches (helical) occupy residues 116 to 136, 260 to 280, and 299 to 319; these read ALATGADSVVVAMQTVGFSTF, IAFGALLAIVNWMAVVPVGVW, and YGPLAAVAAMVMHLAWSAGFW.

It belongs to the glycosyltransferase 2 family.

The protein resides in the cell membrane. It functions in the pathway glycan metabolism; exopolysaccharide biosynthesis. Its function is as follows. Glycosyltransferase required for the synthesis of succinoglycan (EPS I). Needed for the addition of the second sugar (glucose). Catalyzes the formation of a beta-1,3 linkage with the galactose lipid carrier. The protein is Succinoglycan biosynthesis protein ExoA (exoA) of Rhizobium meliloti (strain 1021) (Ensifer meliloti).